A 242-amino-acid chain; its full sequence is uncharacterized protein (242 aa).

Disordered stretches follow at residues 16–121 (GLYK…GAMA) and 152–178 (PVRPAKLPKGKGRLRRPRQSRFKTQPV). 2 stretches are compositionally biased toward pro residues: residues 50–64 (PRPPTGPPARYPSPA) and 97–113 (EPRPPPESPGAQPPPGP). Residues 157-172 (KLPKGKGRLRRPRQSR) are compositionally biased toward basic residues. A Phosphothreonine modification is found at Thr175. 5 positions are modified to phosphoserine: Ser192, Ser206, Ser216, Ser232, and Ser238. Residues 215–242 (QSLSLQREPLGSCKLRNSLDSSDSDSAL) are disordered. Positions 232-242 (SLDSSDSDSAL) are enriched in low complexity.

It localises to the cytoplasm. This is an uncharacterized protein from Rattus norvegicus (Rat).